Reading from the N-terminus, the 133-residue chain is Large ribosomal subunit protein uL22 (133 aa).

Belongs to the universal ribosomal protein uL22 family. In terms of assembly, part of the 50S ribosomal subunit.

In terms of biological role, this protein binds specifically to 23S rRNA; its binding is stimulated by other ribosomal proteins, e.g. L4, L17, and L20. It is important during the early stages of 50S assembly. It makes multiple contacts with different domains of the 23S rRNA in the assembled 50S subunit and ribosome. The globular domain of the protein is located near the polypeptide exit tunnel on the outside of the subunit, while an extended beta-hairpin is found that lines the wall of the exit tunnel in the center of the 70S ribosome. This Aquifex pyrophilus protein is Large ribosomal subunit protein uL22.